Consider the following 690-residue polypeptide: Glutaminase A (690 aa).

An N-terminal signal peptide occupies residues 1–20 (MMHFLSFCLSVASLVSYAGA). N-linked (GlcNAc...) asparagine glycosylation is found at Asn-80, Asn-96, Asn-435, Asn-508, Asn-528, Asn-538, and Asn-571.

This sequence belongs to the fungal glutaminase gtaA family.

Its subcellular location is the secreted. It catalyses the reaction L-glutamine + H2O = L-glutamate + NH4(+). Activity is inhibited by about 80% in the presence of 18% sodium chloride. Its function is as follows. Glutaminase catalyzes the hydrolysis of glutamine to glutamic acid and plays a key role in nitrogen metabolism. Catalyzes the hydrolysis not only of L-glutamine but also of D-glutamine. This Aspergillus oryzae (strain ATCC 42149 / RIB 40) (Yellow koji mold) protein is Glutaminase A.